Reading from the N-terminus, the 262-residue chain is Type III pantothenate kinase (262 aa).

ATP is bound at residue 6–13 (DAGNTNMV). Residues Tyr100 and 107–110 (GADR) contribute to the substrate site. Asp109 serves as the catalytic Proton acceptor. Asp129 is a K(+) binding site. Residue Thr132 coordinates ATP. Position 184 (Thr184) interacts with substrate.

The protein belongs to the type III pantothenate kinase family. As to quaternary structure, homodimer. It depends on NH4(+) as a cofactor. Requires K(+) as cofactor.

It is found in the cytoplasm. The catalysed reaction is (R)-pantothenate + ATP = (R)-4'-phosphopantothenate + ADP + H(+). It functions in the pathway cofactor biosynthesis; coenzyme A biosynthesis; CoA from (R)-pantothenate: step 1/5. Functionally, catalyzes the phosphorylation of pantothenate (Pan), the first step in CoA biosynthesis. This is Type III pantothenate kinase from Clostridium tetani (strain Massachusetts / E88).